Reading from the N-terminus, the 546-residue chain is CTP synthase (546 aa).

The tract at residues 1–267 is amidoligase domain; the sequence is MTKFIFVTGG…AEQVLDILQL (267 aa). CTP is bound at residue Ser13. UTP is bound at residue Ser13. 14-19 provides a ligand contact to ATP; sequence SIGKGI. Tyr54 contributes to the L-glutamine binding site. Asp71 lines the ATP pocket. Residues Asp71 and Glu141 each coordinate Mg(2+). CTP-binding positions include 148-150, 188-193, and Lys224; these read DIE and KTKPTQ. UTP contacts are provided by residues 188–193 and Lys224; that span reads KTKPTQ. The region spanning 292-534 is the Glutamine amidotransferase type-1 domain; that stretch reads EVAIVGKYVR…IKAALGSDLT (243 aa). L-glutamine is bound at residue Gly354. Cys381 serves as the catalytic Nucleophile; for glutamine hydrolysis. Residues 382–385, Glu405, and Arg462 contribute to the L-glutamine site; that span reads LGMQ. Active-site residues include His507 and Glu509.

The protein belongs to the CTP synthase family. In terms of assembly, homotetramer.

The enzyme catalyses UTP + L-glutamine + ATP + H2O = CTP + L-glutamate + ADP + phosphate + 2 H(+). It catalyses the reaction L-glutamine + H2O = L-glutamate + NH4(+). The catalysed reaction is UTP + NH4(+) + ATP = CTP + ADP + phosphate + 2 H(+). It functions in the pathway pyrimidine metabolism; CTP biosynthesis via de novo pathway; CTP from UDP: step 2/2. With respect to regulation, allosterically activated by GTP, when glutamine is the substrate; GTP has no effect on the reaction when ammonia is the substrate. The allosteric effector GTP functions by stabilizing the protein conformation that binds the tetrahedral intermediate(s) formed during glutamine hydrolysis. Inhibited by the product CTP, via allosteric rather than competitive inhibition. Its function is as follows. Catalyzes the ATP-dependent amination of UTP to CTP with either L-glutamine or ammonia as the source of nitrogen. Regulates intracellular CTP levels through interactions with the four ribonucleotide triphosphates. The sequence is that of CTP synthase from Synechococcus sp. (strain ATCC 27144 / PCC 6301 / SAUG 1402/1) (Anacystis nidulans).